A 312-amino-acid polypeptide reads, in one-letter code: Golgi to ER traffic protein 2 (312 aa).

Residues 1-175 (MSDSPSISAE…VQYNTYRHQV (175 aa)) are Cytoplasmic-facing. The chain crosses the membrane as a helical span at residues 176–196 (WKFRFLAVRYFALLANFIYHF). The Lumenal portion of the chain corresponds to 197–224 (YIIGDSISFASSSHQFIRELIPVEPARS). The chain crosses the membrane as a helical span at residues 225–244 (FFTLFSTIEVVIIASYYFLG). At 245-288 (TKEGFFSTATSNNFVVKLLDMGSMVLPQLQQFKTIAVRLLGYYE) the chain is on the cytoplasmic side. Residues 289-309 (LLAVLLGDLSLVVVLFGLHSV) form a helical membrane-spanning segment. Residues 310-312 (LGN) are Lumenal-facing.

Belongs to the GET2 family. Component of the Golgi to ER traffic (GET) complex, which is composed of GET1, GET2 and GET3. Within the complex, GET1 and GET2 form a heterotetramer which is stabilized by phosphatidylinositol binding and which binds to the GET3 homodimer.

It localises to the endoplasmic reticulum membrane. The protein resides in the golgi apparatus membrane. In terms of biological role, required for the post-translational delivery of tail-anchored (TA) proteins to the endoplasmic reticulum. Together with GET1, acts as a membrane receptor for soluble GET3, which recognizes and selectively binds the transmembrane domain of TA proteins in the cytosol. The GET complex cooperates with the HDEL receptor ERD2 to mediate the ATP-dependent retrieval of resident ER proteins that contain a C-terminal H-D-E-L retention signal from the Golgi to the ER. The chain is Golgi to ER traffic protein 2 from Scheffersomyces stipitis (strain ATCC 58785 / CBS 6054 / NBRC 10063 / NRRL Y-11545) (Yeast).